The primary structure comprises 442 residues: Elongation factor 1-gamma (442 aa).

The region spanning 2–87 is the GST N-terminal domain; that stretch reads AAGTLYTYPE…FLSNDALRGS (86 aa). Residues 88–216 form the GST C-terminal domain; it reads TPQASAQVLQ…VKLCEKMAQF (129 aa). 2 stretches are compositionally biased toward basic and acidic residues: residues 224–242 and 249–263; these read MQPK…KEGG and QEKK…KAAP. The tract at residues 224–273 is disordered; the sequence is MQPKKEAPAKKEKAGKEGGKQQQPQQEKKEKKKEEKKAAPAEEEMDECEA. Positions 281-442 constitute an EF-1-gamma C-terminal domain; sequence AKDPYAHLPK…KSFNQGKIFK (162 aa).

EF-1 is composed of four subunits: alpha, beta, delta, and gamma.

Probably plays a role in anchoring the complex to other cellular components. The chain is Elongation factor 1-gamma (eef1g) from Carassius auratus (Goldfish).